We begin with the raw amino-acid sequence, 230 residues long: ATP synthase subunit a (230 aa).

A run of 5 helical transmembrane segments spans residues 17–37, 78–98, 107–127, 165–187, and 198–218; these read LPIT…FIMA, IFPF…IGVI, DLSV…WFGI, LFGN…GFLV, and EAII…AGGI.

It belongs to the ATPase A chain family. F-type ATPases have 2 components, CF(1) - the catalytic core - and CF(0) - the membrane proton channel. CF(1) has five subunits: alpha(3), beta(3), gamma(1), delta(1), epsilon(1). CF(0) has three main subunits: a(1), b(2) and c(9-12). The alpha and beta chains form an alternating ring which encloses part of the gamma chain. CF(1) is attached to CF(0) by a central stalk formed by the gamma and epsilon chains, while a peripheral stalk is formed by the delta and b chains.

The protein resides in the cell inner membrane. Functionally, key component of the proton channel; it plays a direct role in the translocation of protons across the membrane. The protein is ATP synthase subunit a of Legionella pneumophila (strain Corby).